Reading from the N-terminus, the 397-residue chain is Odorant receptor 22b (397 aa).

The Cytoplasmic portion of the chain corresponds to 1 to 49; sequence MLSQFFPHIKEKPLSERVKSRDAFVYLDRVMWSFGWTVPENKRWDLHYK. Residues 50 to 70 form a helical membrane-spanning segment; that stretch reads LWSTFVTLLIFILLPISVSVE. At 71–85 the chain is on the extracellular side; the sequence is YIQRFKTFSAGEFLS. The helical transmembrane segment at 86–105 threads the bilayer; sequence SIQIGVNMYGSSFKSYLTMM. Residues 106–143 lie on the Cytoplasmic side of the membrane; it reads GYKKRQEAKMSLDELDKRCVCDEERTIVHRHVALGNFC. The chain crosses the membrane as a helical span at residues 144–164; sequence YIFYHIAYTSFLISNFLSFIM. Residues 165–194 lie on the Extracellular side of the membrane; sequence KRIHAWRMYFPYVDPEKQFYISSIAEVILR. Residues 195–215 traverse the membrane as a helical segment; sequence GWAVFMDLCTDVCPLISMVIA. The Cytoplasmic portion of the chain corresponds to 216–268; it reads RCHITLLKQRLRNLRSEPGRTEDEYLKELADCVRDHRLILDYVDALRSVFSGT. The helical transmembrane segment at 269–289 threads the bilayer; the sequence is IFVQFLLIGIVLGLSMINIMF. Residues 290–295 are Extracellular-facing; that stretch reads FSTLST. A helical transmembrane segment spans residues 296–316; sequence GVAVVLFMSCVSMQTFPFCYL. Residues 317–347 are Cytoplasmic-facing; that stretch reads CNMIMDDCQEMADSLFQSDWTSADRRYKSTL. The chain crosses the membrane as a helical span at residues 348–368; sequence VYFLHNLQQPIILTAGGVFPI. The Extracellular segment spans residues 369-397; sequence SMQTNLNMVKLAFTVVTIVKQFNLAEKFQ.

It belongs to the insect chemoreceptor superfamily. Heteromeric odorant receptor channel (TC 1.A.69) family. Or2a subfamily. In terms of assembly, interacts with Orco, via conserved C-terminal cytoplasmic loops. Complexes exist early in the endomembrane system in olfactory sensory neurons (OSNs), coupling these complexes to the conserved ciliary trafficking pathway. Expressed with Orco in 20-22 sensory neurons on the medial-proximal edge of the antenna. This expression pattern matches the distribution of the large sensilla basiconica. Expression is first seen at 60 hours APF in a subset of cells restricted to a subregion of the developing antenna. Expression continues throughout antennal development. Expressed in the ab3A neuron which responds to ethyl butyrate.

It is found in the cell membrane. Functionally, odorant receptor which mediates acceptance or avoidance behavior, depending on its substrates. The odorant receptor repertoire encodes a large collection of odor stimuli that vary widely in identity, intensity, and duration. Involved in the behavioral responses to esters. Complexes with Orco to form odorant-sensing units, providing sensitive and prolonged odorant signaling and calcium permeability. They are necessary and sufficient to promote functional reconstitution of odor-evoked signaling in sensory neurons that normally respond only to carbon dioxide. The chain is Odorant receptor 22b (Or22b) from Drosophila melanogaster (Fruit fly).